The chain runs to 646 residues: Centrosomal protein of 72 kDa (646 aa).

LRR repeat units follow at residues 28–49 (ELRS…GNSL), 54–75 (ALKS…QYLV), and 76–97 (SLES…FRLH). The LRRCT domain occupies 110 to 149 (NPVVKNESDYRLFVVHMLPKLRQLDDRPVRESERKASQLH). Residues Ser-117 and Ser-236 each carry the phosphoserine modification. Disordered regions lie at residues 300-342 (SVDV…RFQV) and 357-399 (GPSS…SDPR). The span at 307 to 319 (ASSAQKSSLSSQK) shows a compositional bias: low complexity. Ser-380 is modified (phosphoserine). Residues 383–392 (EALEAEERTS) are compositionally biased toward basic and acidic residues. Ser-402 is modified (phosphoserine). The stretch at 476-622 (LSLENKTLQS…RAEVEQMRWS (147 aa)) forms a coiled coil.

It belongs to the CEP72 family. In terms of assembly, interacts with KIZ, PCM1 and CDK5RAP2.

It is found in the cytoplasm. It localises to the cytoskeleton. The protein localises to the microtubule organizing center. Its subcellular location is the centrosome. The protein resides in the centriolar satellite. Involved in the recruitment of key centrosomal proteins to the centrosome. Provides centrosomal microtubule-nucleation activity on the gamma-tubulin ring complexes (gamma-TuRCs) and has critical roles in forming a focused bipolar spindle, which is needed for proper tension generation between sister chromatids. Required for localization of KIZ, AKAP9 and gamma-tubulin ring complexes (gamma-TuRCs). Involved in centriole duplication. Required for CDK5RAP22, CEP152, WDR62 and CEP63 centrosomal localization and promotes the centrosomal localization of CDK2. This is Centrosomal protein of 72 kDa (Cep72) from Mus musculus (Mouse).